The following is a 216-amino-acid chain: Probable GTP-binding protein EngB (216 aa).

The region spanning 23-197 (EGAEIAFAGR…EHKVAGWLGL (175 aa)) is the EngB-type G domain. Residues 31–38 (GRSNAGKS), 58–62 (GRTQL), 76–79 (DLPG), 143–146 (TKCD), and 176–178 (FSS) contribute to the GTP site. Mg(2+) contacts are provided by Ser-38 and Thr-60.

This sequence belongs to the TRAFAC class TrmE-Era-EngA-EngB-Septin-like GTPase superfamily. EngB GTPase family. Mg(2+) is required as a cofactor.

In terms of biological role, necessary for normal cell division and for the maintenance of normal septation. In Aromatoleum aromaticum (strain DSM 19018 / LMG 30748 / EbN1) (Azoarcus sp. (strain EbN1)), this protein is Probable GTP-binding protein EngB.